The chain runs to 288 residues: 4-diphosphocytidyl-2-C-methyl-D-erythritol kinase (288 aa).

The active site involves lysine 11. 100 to 110 (PIAAGLGSGSS) is an ATP binding site. Aspartate 140 is a catalytic residue.

This sequence belongs to the GHMP kinase family. IspE subfamily.

The enzyme catalyses 4-CDP-2-C-methyl-D-erythritol + ATP = 4-CDP-2-C-methyl-D-erythritol 2-phosphate + ADP + H(+). It functions in the pathway isoprenoid biosynthesis; isopentenyl diphosphate biosynthesis via DXP pathway; isopentenyl diphosphate from 1-deoxy-D-xylulose 5-phosphate: step 3/6. In terms of biological role, catalyzes the phosphorylation of the position 2 hydroxy group of 4-diphosphocytidyl-2C-methyl-D-erythritol. The sequence is that of 4-diphosphocytidyl-2-C-methyl-D-erythritol kinase from Wolbachia sp. subsp. Drosophila simulans (strain wRi).